The primary structure comprises 640 residues: Dextranase (640 aa).

An N-terminal signal peptide occupies residues 1-32; the sequence is MPGTGLGRLAKHVTAAAAVFLISTGAVLPAQA.

The protein belongs to the glycosyl hydrolase 49 family.

It localises to the secreted. It catalyses the reaction Endohydrolysis of (1-&gt;6)-alpha-D-glucosidic linkages in dextran.. This is Dextranase from Arthrobacter globiformis.